We begin with the raw amino-acid sequence, 349 residues long: Cdc42 effector protein 4 (349 aa).

Lys-5 is subject to N6-methyllysine. Ser-18 is modified (phosphoserine). The CRIB domain occupies Ile-27–Gly-41. A phosphoserine mark is found at Ser-64, Ser-103, Ser-107, and Ser-116. The span at Lys-123 to Lys-132 shows a compositional bias: basic and acidic residues. 3 disordered regions span residues Lys-123 to Glu-172, Gln-220 to Ser-240, and Gly-278 to Val-349. Ser-136, Ser-138, Ser-140, Ser-154, Ser-165, Ser-223, Ser-285, and Ser-288 each carry phosphoserine. Residues Ala-280–Ser-308 are compositionally biased toward low complexity. Residues Leu-311 to Asp-322 are compositionally biased toward basic and acidic residues. Residues Phe-338–Val-349 show a composition bias toward acidic residues.

This sequence belongs to the BORG/CEP family. As to quaternary structure, interacts with CDC42 and RHOQ, in a GTP-dependent manner. Ubiquitous.

The protein localises to the endomembrane system. The protein resides in the cytoplasm. Its subcellular location is the cytoskeleton. Probably involved in the organization of the actin cytoskeleton. May act downstream of CDC42 to induce actin filament assembly leading to cell shape changes. Induces pseudopodia formation, when overexpressed in fibroblasts. This chain is Cdc42 effector protein 4 (Cdc42ep4), found in Mus musculus (Mouse).